Here is a 445-residue protein sequence, read N- to C-terminus: Probable spore coat protein sigD (445 aa).

The first 20 residues, 1–20, serve as a signal peptide directing secretion; that stretch reads MKKVITLLALMAAAQIYAQG. In terms of domain architecture, DSCP-N spans 21-139; the sequence is QECINLSENE…GHGVCEDFNR (119 aa). Positions 141-159 are enriched in polar residues; that stretch reads ESGSGNKEQISTTGNTGPQ. The interval 141–161 is disordered; sequence ESGSGNKEQISTTGNTGPQTR. 6 consecutive Follistatin-like domains span residues 178 to 201, 213 to 237, 272 to 295, 324 to 348, 368 to 391, and 416 to 439; these read ACTN…AHCY, GCLN…AHCV, ICSN…AQCV, VCSN…ADCL, VCSN…AQCA, and VCQN…GECV.

Functionally, may contribute to the structure of the coat at the interface between the middle, cellulosic layer and the outer, electron-dense, proteinaceous layer. This chain is Probable spore coat protein sigD (sigD), found in Dictyostelium discoideum (Social amoeba).